The sequence spans 793 residues: Xaa-Pro dipeptidyl-peptidase (793 aa).

Catalysis depends on charge relay system residues serine 363, aspartate 483, and histidine 514.

This sequence belongs to the peptidase S15 family. As to quaternary structure, homodimer.

It is found in the cytoplasm. It carries out the reaction Hydrolyzes Xaa-Pro-|- bonds to release unblocked, N-terminal dipeptides from substrates including Ala-Pro-|-p-nitroanilide and (sequentially) Tyr-Pro-|-Phe-Pro-|-Gly-Pro-|-Ile.. In terms of biological role, removes N-terminal dipeptides sequentially from polypeptides having unsubstituted N-termini provided that the penultimate residue is proline. The protein is Xaa-Pro dipeptidyl-peptidase of Lactobacillus helveticus (strain DPC 4571).